We begin with the raw amino-acid sequence, 209 residues long: Ubiquitin-conjugating enzyme E2 S (209 aa).

One can recognise a UBC core domain in the interval 14–160 (QTIRQVMREL…ARMMTEIHAQ (147 aa)). C98 acts as the Glycyl thioester intermediate in catalysis. A disordered region spans residues 165 to 209 (GVGATGDAKDDGGPSTKKHAGLDKKLQDKKKEKLLKEKKRMLKRL). Residues 184 to 199 (AGLDKKLQDKKKEKLL) are compositionally biased toward basic and acidic residues. The segment covering 200 to 209 (KEKKRMLKRL) has biased composition (basic residues).

Belongs to the ubiquitin-conjugating enzyme family.

The enzyme catalyses S-ubiquitinyl-[E1 ubiquitin-activating enzyme]-L-cysteine + [E2 ubiquitin-conjugating enzyme]-L-cysteine = [E1 ubiquitin-activating enzyme]-L-cysteine + S-ubiquitinyl-[E2 ubiquitin-conjugating enzyme]-L-cysteine.. Its pathway is protein modification; protein ubiquitination. In terms of biological role, catalyzes the covalent attachment of ubiquitin to other proteins. Acts as an essential factor of the anaphase promoting complex/cyclosome (APC/C), a cell cycle-regulated ubiquitin ligase that controls progression through mitosis. Acts by specifically elongating polyubiquitin chains initiated by the E2 enzyme vih/UbcH10 on APC/C substrates, enhancing the degradation of APC/C substrates by the proteasome and promoting mitotic exit. This chain is Ubiquitin-conjugating enzyme E2 S, found in Drosophila simulans (Fruit fly).